A 765-amino-acid polypeptide reads, in one-letter code: MASHIVGYPRMGPKRELKFALESFWDGKSTAEDLKKVSADLRSSIWKQMADAGIKYIPSNTFSYYDQVLDTTAMLGAVPPRYGWTGGEIEFDVYFSMARGNASVPAMEMTKWFDTNYHFIVPELGPEVNFSYASHKAVLEYKEAKALGVDTVPVLVGPVSYLLLSKQAKGVDKSFDLLSLLPKILPIYKEVVAELKEAGASWIQFDEPLLVMDLESHKLQAFSAAYADLESTLSGLNVVVETYFADVTAEAYKTLISLKGVTGYGFDLVRGTKTLDLVKAEFPSGKYLFAGVVDGRNIWANDLAASLATLEALEGVVGKDKLVVSTSCSFLHTAVDLINETKLDDEIKSWLAFAAQKVLEVNALAKALSGQKDEAFFSANAAALASRKSSPRVTNEAVQKAATALKGSDHRRATTVSSRLDAQQKKLNLPILPTTTIGSFPQTVELRRVRREYKAKKISEEEYVKAIKEEISKVVKLQEELDIDVLVHGEPERNDMVEYFGEQLSGFAFSANGWVQSYGSRCVKPPIIYGDVSRPNPMTVFWSSMAQSMTARPMKGMLTGPVTILNWSFVRNDQPRHETCYQIALAIKNEVEDLEKAGINVIQIDEAALREGLPLRKSEHDFYLKWAVHSFRITNVGVQDTTQIHTHMCYSNFNDIIHSIIDMDADVITIENSRSDEKLLSVFREGVKYGAGIGPGVYDIHSPRIPPTEELADRIRKMLAVLESNVLWVNPDCGLKTRKYGEVNPALSNMVAAAKQLRQELASAK.

Positions 18 and 116 each coordinate 5-methyltetrahydropteroyltri-L-glutamate. L-homocysteine is bound by residues 437-439 and glutamate 490; that span reads IGS. Residues 437 to 439 and glutamate 490 each bind L-methionine; that span reads IGS. Residues aspartate 495, tyrosine 518, 521–522, and tryptophan 567 contribute to the 5-methyltetrahydropteroyltri-L-glutamate site; that span reads RC. Position 605 (aspartate 605) interacts with L-homocysteine. Position 605 (aspartate 605) interacts with L-methionine. Histidine 647, cysteine 649, histidine 658, aspartate 662, and glutamate 671 together coordinate Zn(2+). The active-site Proton donor is histidine 701. Residue cysteine 733 coordinates Zn(2+).

The protein belongs to the vitamin-B12 independent methionine synthase family. Zn(2+) serves as cofactor.

The protein resides in the cytoplasm. The enzyme catalyses 5-methyltetrahydropteroyltri-L-glutamate + L-homocysteine = tetrahydropteroyltri-L-glutamate + L-methionine. It participates in amino-acid biosynthesis; L-methionine biosynthesis via de novo pathway; L-methionine from L-homocysteine (MetE route): step 1/1. In terms of biological role, catalyzes the transfer of a methyl group from 5-methyltetrahydrofolate to homocysteine resulting in methionine formation. This is 5-methyltetrahydropteroyltriglutamate--homocysteine methyltransferase (METE) from Mesembryanthemum crystallinum (Common ice plant).